Consider the following 339-residue polypeptide: tRNA N6-adenosine threonylcarbamoyltransferase (339 aa).

Positions 115 and 119 each coordinate Fe cation. Residues 136-140 (LISGG), Asp168, Glu185, and Ser265 each bind substrate. Asp293 lines the Fe cation pocket.

Belongs to the KAE1 / TsaD family. Fe(2+) serves as cofactor.

It is found in the cytoplasm. The enzyme catalyses L-threonylcarbamoyladenylate + adenosine(37) in tRNA = N(6)-L-threonylcarbamoyladenosine(37) in tRNA + AMP + H(+). In terms of biological role, required for the formation of a threonylcarbamoyl group on adenosine at position 37 (t(6)A37) in tRNAs that read codons beginning with adenine. Is probably involved in the transfer of the threonylcarbamoyl moiety of threonylcarbamoyl-AMP (TC-AMP) to the N6 group of A37. This is tRNA N6-adenosine threonylcarbamoyltransferase from Pyrobaculum calidifontis (strain DSM 21063 / JCM 11548 / VA1).